The primary structure comprises 243 residues: Urease accessory protein UreF 2 (243 aa).

This sequence belongs to the UreF family. UreD, UreF and UreG form a complex that acts as a GTP-hydrolysis-dependent molecular chaperone, activating the urease apoprotein by helping to assemble the nickel containing metallocenter of UreC. The UreE protein probably delivers the nickel.

The protein localises to the cytoplasm. Functionally, required for maturation of urease via the functional incorporation of the urease nickel metallocenter. Its function is as follows. Disrupting the ure2 operon has no effect on urease activity or pathogen survival in BALB/c mice when administered orally. The polypeptide is Urease accessory protein UreF 2 (Brucella abortus (strain 2308)).